The primary structure comprises 216 residues: Probable nicotinate-nucleotide adenylyltransferase (216 aa).

Belongs to the NadD family.

It carries out the reaction nicotinate beta-D-ribonucleotide + ATP + H(+) = deamido-NAD(+) + diphosphate. The protein operates within cofactor biosynthesis; NAD(+) biosynthesis; deamido-NAD(+) from nicotinate D-ribonucleotide: step 1/1. Its function is as follows. Catalyzes the reversible adenylation of nicotinate mononucleotide (NaMN) to nicotinic acid adenine dinucleotide (NaAD). This Geobacillus kaustophilus (strain HTA426) protein is Probable nicotinate-nucleotide adenylyltransferase.